A 664-amino-acid polypeptide reads, in one-letter code: UvrABC system protein B (664 aa).

Positions 23–412 (EGLNRGMRFQ…VVEQIIRPTG (390 aa)) constitute a Helicase ATP-binding domain. Position 36–43 (36–43 (GVTGSGKT)) interacts with ATP. Positions 89–112 (YYDYYQPEAYIPTKDLYIEKNADI) match the Beta-hairpin motif. Residues 429–588 (DLVNEIVKVK…ITPRSVIKPL (160 aa)) enclose the Helicase C-terminal domain. Residues 622-657 (EEYMAVLEEEMYRAASELRYEDAAALRDELFRIREE) enclose the UVR domain.

It belongs to the UvrB family. In terms of assembly, forms a heterotetramer with UvrA during the search for lesions. Interacts with UvrC in an incision complex.

The protein resides in the cytoplasm. Functionally, the UvrABC repair system catalyzes the recognition and processing of DNA lesions. A damage recognition complex composed of 2 UvrA and 2 UvrB subunits scans DNA for abnormalities. Upon binding of the UvrA(2)B(2) complex to a putative damaged site, the DNA wraps around one UvrB monomer. DNA wrap is dependent on ATP binding by UvrB and probably causes local melting of the DNA helix, facilitating insertion of UvrB beta-hairpin between the DNA strands. Then UvrB probes one DNA strand for the presence of a lesion. If a lesion is found the UvrA subunits dissociate and the UvrB-DNA preincision complex is formed. This complex is subsequently bound by UvrC and the second UvrB is released. If no lesion is found, the DNA wraps around the other UvrB subunit that will check the other stand for damage. This Thermotoga maritima (strain ATCC 43589 / DSM 3109 / JCM 10099 / NBRC 100826 / MSB8) protein is UvrABC system protein B.